We begin with the raw amino-acid sequence, 208 residues long: Small ribosomal subunit protein uS4 (208 aa).

Positions 97 to 160 constitute an S4 RNA-binding domain; it reads SRLDNIVFRL…KKNDKIAEAL (64 aa).

This sequence belongs to the universal ribosomal protein uS4 family. Part of the 30S ribosomal subunit. Contacts protein S5. The interaction surface between S4 and S5 is involved in control of translational fidelity.

Its function is as follows. One of the primary rRNA binding proteins, it binds directly to 16S rRNA where it nucleates assembly of the body of the 30S subunit. In terms of biological role, with S5 and S12 plays an important role in translational accuracy. This chain is Small ribosomal subunit protein uS4, found in Mesoplasma florum (strain ATCC 33453 / NBRC 100688 / NCTC 11704 / L1) (Acholeplasma florum).